Reading from the N-terminus, the 678-residue chain is Glycine--tRNA ligase beta subunit (678 aa).

The protein belongs to the class-II aminoacyl-tRNA synthetase family. Tetramer of two alpha and two beta subunits.

It localises to the cytoplasm. The enzyme catalyses tRNA(Gly) + glycine + ATP = glycyl-tRNA(Gly) + AMP + diphosphate. The chain is Glycine--tRNA ligase beta subunit from Sulfurihydrogenibium sp. (strain YO3AOP1).